A 378-amino-acid polypeptide reads, in one-letter code: UPF0754 membrane protein BCA_0919 (378 aa).

A run of 2 helical transmembrane segments spans residues 1–21 and 357–377; these read MNIW…GGFT and YLGA…LLFL.

It belongs to the UPF0754 family.

The protein resides in the cell membrane. This is UPF0754 membrane protein BCA_0919 from Bacillus cereus (strain 03BB102).